Here is an 840-residue protein sequence, read N- to C-terminus: Recyclin-1 (840 aa).

The F-box domain maps to Met1–Leu48. Ser409 bears the Phosphoserine mark.

As to quaternary structure, interacts with SKP1.

The protein localises to the cytoplasm. It localises to the bud neck. The protein resides in the cell tip. Involved in recycling plasma membrane proteins internalized by endocytosis. Required for recycling of the v-SNARE SNC1. This chain is Recyclin-1 (RCY1), found in Saccharomyces cerevisiae (strain ATCC 204508 / S288c) (Baker's yeast).